The sequence spans 1098 residues: Probable DNA-directed RNA polymerase (1098 aa).

Positions 1 to 24 (PIRESVRVSTDRDPDLEDEKREQL) are enriched in basic and acidic residues. The segment at 1–26 (PIRESVRVSTDRDPDLEDEKREQLGE) is disordered. Active-site residues include Asp-663, Lys-750, and Asp-915.

It belongs to the phage and mitochondrial RNA polymerase family.

Its subcellular location is the mitochondrion. It carries out the reaction RNA(n) + a ribonucleoside 5'-triphosphate = RNA(n+1) + diphosphate. In terms of biological role, DNA-dependent RNA polymerase catalyzes the transcription of DNA into RNA using the four ribonucleoside triphosphates as substrates. This Zea mays (Maize) protein is Probable DNA-directed RNA polymerase.